The following is a 211-amino-acid chain: ATP-dependent Clp protease proteolytic subunit 1 (211 aa).

Ser107 acts as the Nucleophile in catalysis. The active site involves His132.

Belongs to the peptidase S14 family. In terms of assembly, fourteen ClpP subunits assemble into 2 heptameric rings which stack back to back to give a disk-like structure with a central cavity, resembling the structure of eukaryotic proteasomes.

The protein resides in the cytoplasm. The enzyme catalyses Hydrolysis of proteins to small peptides in the presence of ATP and magnesium. alpha-casein is the usual test substrate. In the absence of ATP, only oligopeptides shorter than five residues are hydrolyzed (such as succinyl-Leu-Tyr-|-NHMec, and Leu-Tyr-Leu-|-Tyr-Trp, in which cleavage of the -Tyr-|-Leu- and -Tyr-|-Trp bonds also occurs).. Functionally, cleaves peptides in various proteins in a process that requires ATP hydrolysis. Has a chymotrypsin-like activity. Plays a major role in the degradation of misfolded proteins. This chain is ATP-dependent Clp protease proteolytic subunit 1, found in Mycolicibacterium paratuberculosis (strain ATCC BAA-968 / K-10) (Mycobacterium paratuberculosis).